A 510-amino-acid polypeptide reads, in one-letter code: GMP synthase [glutamine-hydrolyzing] (510 aa).

In terms of domain architecture, Glutamine amidotransferase type-1 spans 5–195; that stretch reads LVIVVDFGGQ…LFDICNLKGD (191 aa). Residue Cys-82 is the Nucleophile of the active site. Catalysis depends on residues His-169 and Glu-171. In terms of domain architecture, GMPS ATP-PPase spans 196 to 385; that stretch reads WSMSSFVDEK…LGIPHKLVWR (190 aa). 223–229 provides a ligand contact to ATP; sequence SGGVDSS.

Homodimer.

The catalysed reaction is XMP + L-glutamine + ATP + H2O = GMP + L-glutamate + AMP + diphosphate + 2 H(+). It functions in the pathway purine metabolism; GMP biosynthesis; GMP from XMP (L-Gln route): step 1/1. In terms of biological role, catalyzes the synthesis of GMP from XMP. This Clostridium kluyveri (strain NBRC 12016) protein is GMP synthase [glutamine-hydrolyzing].